Reading from the N-terminus, the 115-residue chain is MPRRVLTGRVTSDKMDKTVTVLVDRRIIHPLYKKFIRKSKKYAAHDEANECREGDIVRIVECPPISKRKTWEVVWRNGHVLSTAHKEAIDAAATQIAHAEASGEAAAAAAEHQGA.

The protein belongs to the universal ribosomal protein uS17 family. As to quaternary structure, part of the 30S ribosomal subunit.

Functionally, one of the primary rRNA binding proteins, it binds specifically to the 5'-end of 16S ribosomal RNA. The chain is Small ribosomal subunit protein uS17 from Granulibacter bethesdensis (strain ATCC BAA-1260 / CGDNIH1).